The sequence spans 95 residues: Large ribosomal subunit protein uL23 (95 aa).

Belongs to the universal ribosomal protein uL23 family. As to quaternary structure, part of the 50S ribosomal subunit. Contacts protein L29, and trigger factor when it is bound to the ribosome.

Functionally, one of the early assembly proteins it binds 23S rRNA. One of the proteins that surrounds the polypeptide exit tunnel on the outside of the ribosome. Forms the main docking site for trigger factor binding to the ribosome. This Desulfitobacterium hafniense (strain Y51) protein is Large ribosomal subunit protein uL23.